The following is a 215-amino-acid chain: MKIILLGPPGAGKGTQAKLISSEFSIPHISTGDIFRANISGKTELGMKAKGYMDKGLLVPDELTIDIVKDRISKDDCKSGFLLDGFPRTVNQAEALDKFLVGRKEKIDCALLIDVPREKIFNRMTGRRVCSKCGASYHIEYNPTKVEGICDLCGSPVVQRKDDSEDTVKERLDVYDRQTEPLVVYYRNEAVLKSVDGTQDIDKVFEDIRNVLGEI.

10–15 is a binding site for ATP; that stretch reads GAGKGT. Residues 30–59 are NMP; that stretch reads STGDIFRANISGKTELGMKAKGYMDKGLLV. AMP contacts are provided by residues T31, R36, 57-59, 85-88, and Q92; these read LLV and GFPR. The tract at residues 126–163 is LID; it reads GRRVCSKCGASYHIEYNPTKVEGICDLCGSPVVQRKDD. Residue R127 coordinates ATP. Zn(2+)-binding residues include C130 and C133. Residue 136–137 coordinates ATP; the sequence is SY. Zn(2+) contacts are provided by C150 and C153. R160 and R171 together coordinate AMP. Q199 is a binding site for ATP.

Belongs to the adenylate kinase family. In terms of assembly, monomer.

It localises to the cytoplasm. The enzyme catalyses AMP + ATP = 2 ADP. It participates in purine metabolism; AMP biosynthesis via salvage pathway; AMP from ADP: step 1/1. Functionally, catalyzes the reversible transfer of the terminal phosphate group between ATP and AMP. Plays an important role in cellular energy homeostasis and in adenine nucleotide metabolism. This Clostridium acetobutylicum (strain ATCC 824 / DSM 792 / JCM 1419 / IAM 19013 / LMG 5710 / NBRC 13948 / NRRL B-527 / VKM B-1787 / 2291 / W) protein is Adenylate kinase.